Here is a 341-residue protein sequence, read N- to C-terminus: tRNA N6-adenosine threonylcarbamoyltransferase (341 aa).

Positions 111 and 115 each coordinate Fe cation. Residues 134–138 (LVSGG), aspartate 167, glycine 180, and asparagine 276 each bind substrate. Residue aspartate 304 participates in Fe cation binding.

This sequence belongs to the KAE1 / TsaD family. The cofactor is Fe(2+).

The protein resides in the cytoplasm. It carries out the reaction L-threonylcarbamoyladenylate + adenosine(37) in tRNA = N(6)-L-threonylcarbamoyladenosine(37) in tRNA + AMP + H(+). Functionally, required for the formation of a threonylcarbamoyl group on adenosine at position 37 (t(6)A37) in tRNAs that read codons beginning with adenine. Is involved in the transfer of the threonylcarbamoyl moiety of threonylcarbamoyl-AMP (TC-AMP) to the N6 group of A37, together with TsaE and TsaB. TsaD likely plays a direct catalytic role in this reaction. This Stutzerimonas stutzeri (strain A1501) (Pseudomonas stutzeri) protein is tRNA N6-adenosine threonylcarbamoyltransferase.